The chain runs to 398 residues: Aurofusarin biosynthesis regulatory protein aurR1 (398 aa).

Residues 18–45 (CDNCAKSKVRCGKEQPWCQRCERRGQVC) constitute a DNA-binding region (zn(2)-C6 fungal-type). Disordered regions lie at residues 52–73 (RSRK…GTPP) and 275–314 (AATI…SSLI). 2 stretches are compositionally biased toward basic and acidic residues: residues 56-67 (RTLDAAHPESDQ) and 289-298 (DGKDTERSVS). A compositionally biased stretch (polar residues) spans 299–311 (RDTNVSQDGSEPS).

The protein resides in the nucleus. Its function is as follows. Transcription factor that specifically regulates the expression of the gene cluster that mediates the biosynthesis of aurofusarin, a red mycelium pigment which is acting as a mycotoxin. In Gibberella zeae (strain ATCC MYA-4620 / CBS 123657 / FGSC 9075 / NRRL 31084 / PH-1) (Wheat head blight fungus), this protein is Aurofusarin biosynthesis regulatory protein aurR1.